The sequence spans 190 residues: Imidazoleglycerol-phosphate dehydratase (190 aa).

This sequence belongs to the imidazoleglycerol-phosphate dehydratase family.

It localises to the cytoplasm. It catalyses the reaction D-erythro-1-(imidazol-4-yl)glycerol 3-phosphate = 3-(imidazol-4-yl)-2-oxopropyl phosphate + H2O. The protein operates within amino-acid biosynthesis; L-histidine biosynthesis; L-histidine from 5-phospho-alpha-D-ribose 1-diphosphate: step 6/9. This is Imidazoleglycerol-phosphate dehydratase from Sulfurovum sp. (strain NBC37-1).